Reading from the N-terminus, the 337-residue chain is Phosphatidylglycerophosphate phosphatase PTPMT1 (337 aa).

The disordered stretch occupies residues 1–20; it reads MYIKELTETDEEKRERSVED. Residues tyrosine 55 and aspartate 133 each coordinate substrate. In terms of domain architecture, Tyrosine-protein phosphatase spans 73–220; the sequence is WWDRVAEFIL…VVEYYHVKVL (148 aa). Cysteine 164 (phosphocysteine intermediate) is an active-site residue. The Glucan phosphatase signature motif CXAGXGR signature appears at 164–170; it reads CKAGRGR. 165–170 serves as a coordination point for substrate; that stretch reads KAGRGR.

It belongs to the protein-tyrosine phosphatase family. Non-receptor class dual specificity subfamily. Expressed in stems, roots, flowers, mature seeds and leaves.

The catalysed reaction is O-phospho-L-seryl-[protein] + H2O = L-seryl-[protein] + phosphate. It carries out the reaction O-phospho-L-threonyl-[protein] + H2O = L-threonyl-[protein] + phosphate. The enzyme catalyses O-phospho-L-tyrosyl-[protein] + H2O = L-tyrosyl-[protein] + phosphate. It catalyses the reaction a 1,2-diacyl-sn-glycero-3-phospho-(1'-sn-glycero-3'-phosphate) + H2O = a 1,2-diacyl-sn-glycero-3-phospho-(1'-sn-glycerol) + phosphate. It functions in the pathway phospholipid metabolism; phosphatidylglycerol biosynthesis; phosphatidylglycerol from CDP-diacylglycerol: step 2/2. Its function is as follows. Exhibits phosphatidylglycerophosphate phosphatase activity. Involved in root growth and columella cells organization. May possess protein phosphatase activity. The polypeptide is Phosphatidylglycerophosphate phosphatase PTPMT1 (Arabidopsis thaliana (Mouse-ear cress)).